A 463-amino-acid polypeptide reads, in one-letter code: Carnosine N-methyltransferase (463 aa).

Disordered regions lie at residues 1–64 and 79–104; these read MTKN…SQLK and KHNHDHSHDHNHDYDDNNEDDEEKEE. Over residues 9–58 the composition is skewed to low complexity; sequence KSNNSNISNNNNNNNNNNNNNNNNNNNNNNNNNNNNNNNNNNNNNNNNKN. Residues 79–93 are compositionally biased toward basic and acidic residues; the sequence is KHNHDHSHDHNHDYD. Acidic residues predominate over residues 94 to 103; that stretch reads DNNEDDEEKE. S-adenosyl-L-methionine-binding residues include Q215, R218, G260, E281, D351, F352, and C367. Residue D371 coordinates carnosine. Position 379 (Y379) interacts with S-adenosyl-L-methionine. Positions 402 and 450 each coordinate carnosine.

Belongs to the carnosine N-methyltransferase family.

The enzyme catalyses carnosine + S-adenosyl-L-methionine = anserine + S-adenosyl-L-homocysteine + H(+). Its function is as follows. N-methyltransferase that mediates the formation of anserine (beta-alanyl-N(Pi)-methyl-L-histidine) from carnosine. This Dictyostelium discoideum (Social amoeba) protein is Carnosine N-methyltransferase.